The sequence spans 651 residues: J domain-containing protein required for chloroplast accumulation response 1 (651 aa).

A compositionally biased stretch (polar residues) spans 1–17; the sequence is MQTLPSSETVLLGSNSA. 5 disordered regions span residues 1-56, 114-138, 156-176, 250-291, and 308-526; these read MQTL…TRHS, GSRILSPAHKPESSSGTSSPSQFSL, LNKNKETVSSSPLSRTSSKAD, KLGK…TDLK, and KPLD…IDEP. S56 is subject to Phosphoserine. Residues 126–137 are compositionally biased toward low complexity; it reads SSSGTSSPSQFS. 6 stretches are compositionally biased toward basic and acidic residues: residues 250-259, 281-291, 337-357, 405-416, 441-456, and 488-497; these read KLGKNEEGDG, TKEEKTETDLK, IFHEEDERQDEKIVSEREVRK, VGKDGVKGKVSD, RAKETPKTDIIHDGSN, and QKKDSDRESM. A coiled-coil region spans residues 532-562; the sequence is DVEDITQDENKMEEANKDAEEIKNIDAKIRK. Residues 586 to 651 form the J domain; sequence SGWKPVPLMD…WDHFNTLGPV (66 aa).

In terms of tissue distribution, expressed in leaves and stems, but not in roots.

The protein localises to the cytoplasm. In terms of biological role, required for chloroplast photorelocation movement; chloroplast accumulation upon low blue light and for chloroplast movement to the bottom of cells in darkness, by modulating chloroplast actin (Cp-actin) filaments distribution, appearance and disappearance. May mediate a slight resistance to aluminum in root hair cells. The sequence is that of J domain-containing protein required for chloroplast accumulation response 1 (JAC1) from Arabidopsis thaliana (Mouse-ear cress).